The primary structure comprises 343 residues: Protein RecA (343 aa).

An ATP-binding site is contributed by 66–73; that stretch reads GPESSGKT.

Belongs to the RecA family.

It localises to the cytoplasm. Functionally, can catalyze the hydrolysis of ATP in the presence of single-stranded DNA, the ATP-dependent uptake of single-stranded DNA by duplex DNA, and the ATP-dependent hybridization of homologous single-stranded DNAs. It interacts with LexA causing its activation and leading to its autocatalytic cleavage. This chain is Protein RecA, found in Rickettsia bellii (strain RML369-C).